A 271-amino-acid chain; its full sequence is Phosphatidylinositol transfer protein beta isoform (271 aa).

Lysine 215 carries the N6-acetyllysine modification. Serine 262 is subject to Phosphoserine; by PKC.

It belongs to the PtdIns transfer protein family. PI transfer class I subfamily. In terms of processing, constitutive phosphorylation of Ser-262 has no effect on phospholipid transfer activity but is required for Golgi targeting.

It is found in the golgi apparatus. The protein localises to the golgi apparatus membrane. The protein resides in the endoplasmic reticulum membrane. The catalysed reaction is a 1,2-diacyl-sn-glycero-3-phosphocholine(in) = a 1,2-diacyl-sn-glycero-3-phosphocholine(out). It carries out the reaction a 1,2-diacyl-sn-glycero-3-phospho-(1D-myo-inositol)(in) = a 1,2-diacyl-sn-glycero-3-phospho-(1D-myo-inositol)(out). The enzyme catalyses an N-(acyl)-sphingosylphosphocholine(in) = an N-(acyl)-sphingosylphosphocholine(out). Catalyzes the transfer of phosphatidylinositol, phosphatidylcholine and sphingomyelin between membranes. Required for COPI-mediated retrograde transport from the Golgi to the endoplasmic reticulum; phosphatidylinositol and phosphatidylcholine transfer activity is essential for this function. This Mus musculus (Mouse) protein is Phosphatidylinositol transfer protein beta isoform (Pitpnb).